We begin with the raw amino-acid sequence, 146 residues long: 3-hydroxyacyl-[acyl-carrier-protein] dehydratase FabZ (146 aa).

H49 is a catalytic residue.

The protein belongs to the thioester dehydratase family. FabZ subfamily.

The protein localises to the cytoplasm. It carries out the reaction a (3R)-hydroxyacyl-[ACP] = a (2E)-enoyl-[ACP] + H2O. In terms of biological role, involved in unsaturated fatty acids biosynthesis. Catalyzes the dehydration of short chain beta-hydroxyacyl-ACPs and long chain saturated and unsaturated beta-hydroxyacyl-ACPs. This is 3-hydroxyacyl-[acyl-carrier-protein] dehydratase FabZ from Pseudomonas putida (strain ATCC 700007 / DSM 6899 / JCM 31910 / BCRC 17059 / LMG 24140 / F1).